Here is a 127-residue protein sequence, read N- to C-terminus: Chondrosarcoma-associated gene 2/3 protein (127 aa).

Residues 68-127 form a disordered region; that stretch reads MSRKPRASSPLSNNHPPTPKRRGSGRHPLNPGPEALSKFPRQPGREKGPIKEVPGTKGSP.

Weakly expressed in kidney. Expressed in various tumor cell lines including carcinomas, myeloid and lymphoid malignancies, melanomas and prostate cancer. Overexpressed in taxol-resistant breast cancer line MDA 435TR and the doxorubicin-resistant multiple myelanoma lines RPMI-8226/Dox40 and RPMI-8226/MDR10V.

Drug-resistance related protein, its expression is associated with the chemotherapy resistant and neoplastic phenotype. May also be linked to the malignant phenotype. The chain is Chondrosarcoma-associated gene 2/3 protein (CSAG2) from Homo sapiens (Human).